The primary structure comprises 217 residues: Orotate phosphoribosyltransferase (217 aa).

Lysine 26 contributes to the 5-phospho-alpha-D-ribose 1-diphosphate binding site. Residue 34–35 (FF) coordinates orotate. 5-phospho-alpha-D-ribose 1-diphosphate contacts are provided by residues 72–73 (YK), arginine 99, lysine 100, lysine 103, histidine 105, and 124–132 (DDVITAGTA). Orotate-binding residues include threonine 128 and arginine 156.

The protein belongs to the purine/pyrimidine phosphoribosyltransferase family. PyrE subfamily. Homodimer. The cofactor is Mg(2+).

The catalysed reaction is orotidine 5'-phosphate + diphosphate = orotate + 5-phospho-alpha-D-ribose 1-diphosphate. The protein operates within pyrimidine metabolism; UMP biosynthesis via de novo pathway; UMP from orotate: step 1/2. Catalyzes the transfer of a ribosyl phosphate group from 5-phosphoribose 1-diphosphate to orotate, leading to the formation of orotidine monophosphate (OMP). In Aeromonas salmonicida (strain A449), this protein is Orotate phosphoribosyltransferase.